Reading from the N-terminus, the 154-residue chain is Protein-export protein SecB (154 aa).

It belongs to the SecB family. In terms of assembly, homotetramer, a dimer of dimers. One homotetramer interacts with 1 SecA dimer.

It is found in the cytoplasm. Functionally, one of the proteins required for the normal export of preproteins out of the cell cytoplasm. It is a molecular chaperone that binds to a subset of precursor proteins, maintaining them in a translocation-competent state. It also specifically binds to its receptor SecA. This Vibrio parahaemolyticus serotype O3:K6 (strain RIMD 2210633) protein is Protein-export protein SecB.